The sequence spans 1048 residues: Transcription factor mef2A (1048 aa).

In terms of domain architecture, MADS-box spans 1-61 (MGRNKITIEK…NKLFQYSSRD (61 aa)). The span at 74–85 (DNTRKNLTNQDY) shows a compositional bias: polar residues. Disordered regions lie at residues 74 to 263 (DNTR…QAAQ), 294 to 339 (QQQH…QQQQ), 386 to 812 (GIYG…NINT), and 916 to 1048 (LLLT…EPKN). Acidic residues predominate over residues 97–110 (DDEDGDDDGDEDLG). Low complexity-rich tracts occupy residues 130-205 (NNNN…NANH), 212-263 (GNSA…QAAQ), 294-303 (QQQHQQQQQN), 327-339 (QQQQ…QQQQ), 393-437 (PPQM…IMNK), 446-466 (YYDY…NSNG), and 481-500 (QQQS…HQSP). Residues 249-304 (NNNSNGYQQQQQAAQQAVQQAQMAQQMHLQQQQQYQQLQHIQQQQQQQHQQQQQNM) are a coiled coil. The span at 506-522 (YSPQQQSPVLNSQNGHH) shows a compositional bias: polar residues. Positions 529–539 (HQMHHQQHQHQ) are enriched in basic residues. Over residues 540-593 (QHPQMQQQQQQQQQHQQHPQMQQIQQQQHPQMQQHQQHQQQHPQMQQQHMNNHQ) the composition is skewed to low complexity. The span at 600-618 (NSSPEINSQKNVHSSPLIM) shows a compositional bias: polar residues. Over residues 619 to 699 (NSNNNNNNNN…NSNNGNNNNN (81 aa)) the composition is skewed to low complexity. Positions 715 to 736 (SSPTIPEQPSINVSTSSNSAHV) are enriched in polar residues. Composition is skewed to low complexity over residues 738 to 802 (NNIT…SSST), 924 to 960 (SNNS…SSSS), and 982 to 1029 (NNNN…NNSN).

It is found in the nucleus. In terms of biological role, transcription factor that regulates cell differentiation during development. Seems to negatively regulate prestalk gene expression and positively regulate prespore gene expression. This is Transcription factor mef2A (mef2A) from Dictyostelium discoideum (Social amoeba).